A 592-amino-acid polypeptide reads, in one-letter code: Putative RING finger protein ORF9 (592 aa).

The RING-type zinc finger occupies 12–49 (CCICLEEDIERVDTIPCQHTVCRPCYLKPMINKCPVCR). Positions 414-441 (WELIKREELLQRRYKREEQNLKYTSNRL) form a coiled coil.

The sequence is that of Putative RING finger protein ORF9 from Ostreid herpesvirus 1 (isolate France) (OsHV-1).